A 254-amino-acid polypeptide reads, in one-letter code: Homeobox protein Dlx4b (254 aa).

A DNA-binding region (homeobox) is located at residues 129–188; it reads IRKPRTIYSSVQLQALHQRFQQTQYLALPERADLAAKLGLTQTQVKIWFQNKRSKYKKIM.

This sequence belongs to the distal-less homeobox family.

Its subcellular location is the nucleus. In terms of biological role, during larvae development, may be important for neurocranium morphogenesis. The polypeptide is Homeobox protein Dlx4b (dlx4b) (Danio rerio (Zebrafish)).